The primary structure comprises 139 residues: Cytochrome c2 (139 aa).

A signal peptide spans 1–25 (MVKKLLTILSIAATAGSLSIGTASA). Gln26 carries the pyrrolidone carboxylic acid modification. The heme c site is built by Cys38, Cys41, His42, and Met118.

This sequence belongs to the cytochrome c family. Post-translationally, binds 1 heme c group covalently per subunit.

Its function is as follows. Cytochrome c2 is found mainly in purple, non-sulfur, photosynthetic bacteria where it functions as the electron donor to the oxidized bacteriochlorophyll in the photophosphorylation pathway. However, it may also have a role in the respiratory chain and is found in some non-photosynthetic bacteria. In Rhodopseudomonas palustris (strain ATCC BAA-98 / CGA009), this protein is Cytochrome c2 (cycA).